The chain runs to 410 residues: Probable nicotinate phosphoribosyltransferase (410 aa).

Nicotinate contacts are provided by Tyr15, Phe170, and Thr220. His223 bears the Phosphohistidine mark. Thr348 contributes to the 5-phospho-alpha-D-ribose 1-diphosphate binding site.

This sequence belongs to the NAPRTase family. Requires Mg(2+) as cofactor. It depends on Mn(2+) as a cofactor. In terms of processing, transiently phosphorylated on a His residue during the reaction cycle. Phosphorylation strongly increases the affinity for substrates and increases the rate of nicotinate D-ribonucleotide production. Dephosphorylation regenerates the low-affinity form of the enzyme, leading to product release.

The enzyme catalyses nicotinate + 5-phospho-alpha-D-ribose 1-diphosphate + ATP + H2O = nicotinate beta-D-ribonucleotide + ADP + phosphate + diphosphate. It participates in cofactor biosynthesis; NAD(+) biosynthesis; nicotinate D-ribonucleotide from nicotinate: step 1/1. Functionally, catalyzes the first step in the biosynthesis of NAD from nicotinic acid, the ATP-dependent synthesis of beta-nicotinate D-ribonucleotide from nicotinate and 5-phospho-D-ribose 1-phosphate. Helps prevent cellular oxidative stress via its role in NAD biosynthesis. The protein is Probable nicotinate phosphoribosyltransferase of Schizosaccharomyces pombe (strain 972 / ATCC 24843) (Fission yeast).